The sequence spans 259 residues: MKATVLAGLAAVIAAQGVAGHATFQQLWVDGEDKISACARLPLSNSPVTDVNSAEIACNANSGPAAEKCTVSAGGVVTVEMHQQPGDRSCDNEAIGGNHWGPVLVYMSKVDDSATADGSGGWFKIFEDTWAPAPNSNSGSDDYWGVKDLNAHCGRMDVPIPADLAPGDYLLRAEVIALHTASSPGGAQFYMTCYQLTVDGEGSQSPQTVSFPGAYSPSDPGIQINIYQKLTEYVSPGPAVIEGGTTVEAGTGGSTIPAN.

The first 20 residues, 1-20 (MKATVLAGLAAVIAAQGVAG), serve as a signal peptide directing secretion. The Cu(2+) site is built by histidine 21 and histidine 99. Cysteine 69 and cysteine 193 are joined by a disulfide. O2-binding residues include histidine 179 and glutamine 188. Tyrosine 190 provides a ligand contact to Cu(2+).

It belongs to the polysaccharide monooxygenase AA9 family. It depends on Cu(2+) as a cofactor.

It is found in the secreted. The enzyme catalyses [(1-&gt;4)-beta-D-glucosyl]n+m + reduced acceptor + O2 = 4-dehydro-beta-D-glucosyl-[(1-&gt;4)-beta-D-glucosyl]n-1 + [(1-&gt;4)-beta-D-glucosyl]m + acceptor + H2O.. Functionally, lytic polysaccharide monooxygenase (LPMO) that depolymerizes crystalline and amorphous polysaccharides via the oxidation of scissile alpha- or beta-(1-4)-glycosidic bonds, yielding C1 or C4 oxidation products. Catalysis by LPMOs requires the reduction of the active-site copper from Cu(II) to Cu(I) by a reducing agent and H(2)O(2) or O(2) as a cosubstrate. This is AA9 family lytic polysaccharide monooxygenase E from Malbranchea cinnamomea (Thermophilic fungus).